The sequence spans 46 residues: Protein PsbN (46 aa).

The chain crosses the membrane as a helical span at residues 10 to 30; the sequence is VAIAVLAALLGLTGFGVYTAF.

It belongs to the PsbN family.

It is found in the cellular thylakoid membrane. Its function is as follows. May play a role in photosystem I and II biogenesis. The chain is Protein PsbN from Synechococcus sp. (strain WH7803).